The primary structure comprises 79 residues: MAPPGGILFLLLLPVAAAQVTSGSCSGCGPLSLPLLAGLVAADAVVSLLIVVGVFVCGRPRSRPTQEDGKIYINMPGRG.

The signal sequence occupies residues 1–18 (MAPPGGILFLLLLPVAAA). Topologically, residues 19 to 35 (QVTSGSCSGCGPLSLPL) are extracellular. A helical membrane pass occupies residues 36 to 56 (LAGLVAADAVVSLLIVVGVFV). At 57–79 (CGRPRSRPTQEDGKIYINMPGRG) the chain is on the cytoplasmic side. Tyr-72 is subject to Phosphotyrosine. Residues 72–74 (YIN) are GRB2 binding site. Positions 72-75 (YINM) are PIK3R1 binding site.

It belongs to the DAP10 family. Homodimer; Disulfide-linked. Heterohexamer composed of four subunits of HCST/DAP10 and two subunits of KLRK1. Interacts (via transmembrane domain) with KLRK1 (via transmembrane domain); the interaction is required for KLRK1 NK cell surface and induces NK cell-mediated cytotoxicity. Interacts with PIK3R1 and GRB2. Interacts with CLEC5A. Forms an CLEC5A/TYROBP/HCST trimolecular complex depending almost solely on TYROBP. Interacts with KLRK1. Interacts with CD300H. Phosphorylated; PIK3R1 and GRB2 associate specifically with tyrosine-phosphorylated HCST. Post-translationally, O-glycosylated. In terms of tissue distribution, expressed predominantly in lymphohematopoietic tissues.

The protein resides in the membrane. In terms of biological role, transmembrane adapter protein which associates with KLRK1 to form an activation receptor KLRK1-HCST in lymphoid and myeloid cells; this receptor plays a major role in triggering cytotoxicity against target cells expressing cell surface ligands such as MHC class I chain-related MICA and MICB, and UL16-binding proteins (ULBPs); these ligands are up-regulated by stress conditions and pathological state such as viral infection and tumor transformation. Functions as a docking site for PI3-kinase PIK3R1 and GRB2. Interaction of ULBPs with KLRK1-HCST triggers calcium mobilization and activation of the PIK3R1, MAP2K/ERK, and JAK2/STAT5 signaling pathways. Both PIK3R1 and GRB2 are required for full KLRK1-HCST-mediated activation and ultimate killing of target cells. In NK cells, KLRK1-HCST signaling directly induces cytotoxicity and enhances cytokine production initiated via DAP12/TYROBP-associated receptors. In T-cells, it provides primarily costimulation for TCR-induced signals. KLRK1-HCST receptor plays a role in immune surveillance against tumors and is required for cytolysis of tumors cells; indeed, melanoma cells that do not express KLRK1 ligands escape from immune surveillance mediated by NK cells. This is Hematopoietic cell signal transducer (HCST) from Sus scrofa (Pig).